We begin with the raw amino-acid sequence, 578 residues long: Arginine--tRNA ligase (578 aa).

The 'HIGH' region motif lies at 125–135; sequence PNVAKKMHVGH.

It belongs to the class-I aminoacyl-tRNA synthetase family. Monomer.

Its subcellular location is the cytoplasm. It catalyses the reaction tRNA(Arg) + L-arginine + ATP = L-arginyl-tRNA(Arg) + AMP + diphosphate. In Buchnera aphidicola subsp. Baizongia pistaciae (strain Bp), this protein is Arginine--tRNA ligase.